The chain runs to 320 residues: Olfactory receptor 2W1 (320 aa).

Over Met1–Met25 the chain is Extracellular. Asn5 carries an N-linked (GlcNAc...) asparagine glycan. A helical membrane pass occupies residues Ile26–Ser49. The Cytoplasmic portion of the chain corresponds to Leu50–Thr57. Residues Pro58–Pro79 form a helical membrane-spanning segment. Residues Gln80 to Gln100 are Extracellular-facing. Cys97 and Cys189 form a disulfide bridge. The helical transmembrane segment at Leu101–Tyr120 threads the bilayer. The Cytoplasmic segment spans residues Asp121–His139. Residues Leu140 to Val158 traverse the membrane as a helical segment. The Extracellular portion of the chain corresponds to Leu159–Val195. Residues Glu196–Gly219 traverse the membrane as a helical segment. Residues Tyr220–Lys236 lie on the Cytoplasmic side of the membrane. The helical transmembrane segment at Ala237–Tyr259 threads the bilayer. Residues Leu260 to Lys272 are Extracellular-facing. The helical transmembrane segment at Phe273–Leu292 threads the bilayer. Over Arg293–Ser320 the chain is Cytoplasmic.

Belongs to the G-protein coupled receptor 1 family.

Its subcellular location is the cell membrane. Its function is as follows. Odorant receptor. The polypeptide is Olfactory receptor 2W1 (OR2W1) (Homo sapiens (Human)).